The primary structure comprises 105 residues: Ig lambda chain C region (105 aa).

In terms of domain architecture, Ig-like spans 6–100; sequence PSVILFPPSS…EGHTVEKSLA (95 aa). A disulfide bridge links Cys27 with Cys86.

The polypeptide is Ig lambda chain C region (Oryctolagus cuniculus (Rabbit)).